A 146-amino-acid polypeptide reads, in one-letter code: Ribonuclease H (146 aa).

Residues 1–136 (MKHIEIYTDG…CDTLAREAAL (136 aa)) form the RNase H type-1 domain. Residues Asp-9, Glu-47, Asp-69, and Asp-128 each contribute to the Mg(2+) site.

It belongs to the RNase H family. In terms of assembly, monomer. Mg(2+) serves as cofactor.

It localises to the cytoplasm. The catalysed reaction is Endonucleolytic cleavage to 5'-phosphomonoester.. In terms of biological role, endonuclease that specifically degrades the RNA of RNA-DNA hybrids. The chain is Ribonuclease H from Campylobacter jejuni subsp. jejuni serotype O:23/36 (strain 81-176).